The primary structure comprises 562 residues: Probable malate:quinone oxidoreductase (562 aa).

A disordered region spans residues 535-562 (SATPADPTIAPKNQHSTTYNANSEMQAL). Residues 545–562 (PKNQHSTTYNANSEMQAL) are compositionally biased toward polar residues.

Belongs to the MQO family. Requires FAD as cofactor.

The enzyme catalyses (S)-malate + a quinone = a quinol + oxaloacetate. Its pathway is carbohydrate metabolism; tricarboxylic acid cycle; oxaloacetate from (S)-malate (quinone route): step 1/1. This chain is Probable malate:quinone oxidoreductase, found in Xylella fastidiosa (strain M23).